We begin with the raw amino-acid sequence, 301 residues long: Probable alpha-L-glutamate ligase 1 (301 aa).

Positions leucine 104–glutamate 287 constitute an ATP-grasp domain. ATP contacts are provided by residues lysine 141, glutamate 178–tyrosine 179, aspartate 187, and arginine 211–asparagine 213. The Mg(2+) site is built by aspartate 248, glutamate 260, and asparagine 262. The Mn(2+) site is built by aspartate 248, glutamate 260, and asparagine 262.

It belongs to the RimK family. Mg(2+) is required as a cofactor. Mn(2+) serves as cofactor.

The polypeptide is Probable alpha-L-glutamate ligase 1 (Shewanella sp. (strain ANA-3)).